We begin with the raw amino-acid sequence, 346 residues long: Phosphoribosylformylglycinamidine cyclo-ligase (346 aa).

The protein belongs to the AIR synthase family.

The protein localises to the cytoplasm. The catalysed reaction is 2-formamido-N(1)-(5-O-phospho-beta-D-ribosyl)acetamidine + ATP = 5-amino-1-(5-phospho-beta-D-ribosyl)imidazole + ADP + phosphate + H(+). It participates in purine metabolism; IMP biosynthesis via de novo pathway; 5-amino-1-(5-phospho-D-ribosyl)imidazole from N(2)-formyl-N(1)-(5-phospho-D-ribosyl)glycinamide: step 2/2. The protein is Phosphoribosylformylglycinamidine cyclo-ligase of Prochlorococcus marinus (strain NATL1A).